The following is a 334-amino-acid chain: MAATIYYENDADLSHLKGKKVAILGYGSQGHAQAQNLRDSGCEVIIGQRPGSANYDLAVSHGFEPMSIAEATKAADVINVLLPDEVQADIYRDSIRDNLSEGNVLMCSHGFNIHFGQIDPPKGIDTLLVAPKGPGHLVRSEYEKGGGVPALIALGEGASETTKQIGLAYAKGIGGTRGGVIETTFAEETETDLFGEQVVLCGGVSELVKAGFDTLVEAGYQPEMAYFECMHELKLIVDLLYEGGLSYMRYSISNTAEYGDYVTGPRIITDETKAEMKKVLEEIQQGEFARKWISENRAGAPFFKATRRRERLHGVEQIGLGLRRMMNWIDEKEV.

Residues Ala-3–Thr-183 form the KARI N-terminal Rossmann domain. NADP(+) contacts are provided by residues Tyr-26–Gln-29, Arg-49, Ser-52, and Asp-84–Gln-87. The active site involves His-109. Gly-135 serves as a coordination point for NADP(+). A KARI C-terminal knotted domain is found at Thr-184–Ile-329. Asp-192, Glu-196, Glu-228, and Glu-232 together coordinate Mg(2+). Substrate is bound at residue Ser-253.

It belongs to the ketol-acid reductoisomerase family. It depends on Mg(2+) as a cofactor.

It carries out the reaction (2R)-2,3-dihydroxy-3-methylbutanoate + NADP(+) = (2S)-2-acetolactate + NADPH + H(+). The catalysed reaction is (2R,3R)-2,3-dihydroxy-3-methylpentanoate + NADP(+) = (S)-2-ethyl-2-hydroxy-3-oxobutanoate + NADPH + H(+). Its pathway is amino-acid biosynthesis; L-isoleucine biosynthesis; L-isoleucine from 2-oxobutanoate: step 2/4. The protein operates within amino-acid biosynthesis; L-valine biosynthesis; L-valine from pyruvate: step 2/4. Its function is as follows. Involved in the biosynthesis of branched-chain amino acids (BCAA). Catalyzes an alkyl-migration followed by a ketol-acid reduction of (S)-2-acetolactate (S2AL) to yield (R)-2,3-dihydroxy-isovalerate. In the isomerase reaction, S2AL is rearranged via a Mg-dependent methyl migration to produce 3-hydroxy-3-methyl-2-ketobutyrate (HMKB). In the reductase reaction, this 2-ketoacid undergoes a metal-dependent reduction by NADPH to yield (R)-2,3-dihydroxy-isovalerate. The sequence is that of Ketol-acid reductoisomerase (NADP(+)) from Rhodopirellula baltica (strain DSM 10527 / NCIMB 13988 / SH1).